Reading from the N-terminus, the 436-residue chain is Glucose-1-phosphate adenylyltransferase (436 aa).

Residues Y112, G178, 193 to 194, and S211 each bind alpha-D-glucose 1-phosphate; that span reads EK.

This sequence belongs to the bacterial/plant glucose-1-phosphate adenylyltransferase family. In terms of assembly, homotetramer.

It catalyses the reaction alpha-D-glucose 1-phosphate + ATP + H(+) = ADP-alpha-D-glucose + diphosphate. The protein operates within glycan biosynthesis; glycogen biosynthesis. Functionally, involved in the biosynthesis of ADP-glucose, a building block required for the elongation reactions to produce glycogen. Catalyzes the reaction between ATP and alpha-D-glucose 1-phosphate (G1P) to produce pyrophosphate and ADP-Glc. This chain is Glucose-1-phosphate adenylyltransferase, found in Histophilus somni (strain 129Pt) (Haemophilus somnus).